Consider the following 344-residue polypeptide: Nuclear distribution protein nudE homolog 1 (344 aa).

The tract at residues 1 to 93 is self-association; that stretch reads MEDSGKTFES…MQHSEGYRQI (93 aa). The stretch at 18–188 forms a coiled coil; that stretch reads WRDLAMTYKQ…ELAVQQKQDK (171 aa). Positions 88–156 are interaction with PAFAH1B1; it reads EGYRQISALE…ERNAFLESEL (69 aa). Positions 167 to 290 are interaction with CENPF; that stretch reads QRLKDEARDL…QSPSRTSGPA (124 aa). The interval 181–246 is disordered; sequence AVQQKQDKPR…DSSTSGTPLT (66 aa). S211 carries the phosphoserine modification. A phosphothreonine mark is found at T215 and T228. S239 carries the phosphoserine modification. Phosphothreonine occurs at positions 243 and 246. Residue C274 is the site of S-palmitoyl cysteine; by ZDHHC2, ZDHHC3 and ZDHHC7 attachment. The span at 279 to 289 shows a compositional bias: polar residues; that stretch reads YDQSPSRTSGP. The tract at residues 279–337 is disordered; it reads YDQSPSRTSGPASGRGTKNRDGVDRRPGSTSVGDKGSGKRLEFGKPASEPASPALPSAQ. S282 is subject to Phosphoserine. Over residues 296 to 305 the composition is skewed to basic and acidic residues; it reads KNRDGVDRRP. Phosphoserine is present on S309. The segment covering 324 to 336 has biased composition (low complexity); that stretch reads PASEPASPALPSA.

Belongs to the nudE family. Homodimer. Interacts with dynactin and PCM1. Interacts with CENPF, LIS1, CNTRL, dynein, tubulin gamma, PAFAH1B1, PCNT, SLMAP and TCP1. Interacts with ZNF365. Interacts with RAB9A; the interaction leads to RAB9A-dynein motor tethering. Interacts (via C-terminus) with MCRS1 (via C-terminus); phosphorylation of NDE1 inhibits the interaction. Post-translationally, phosphorylated in mitosis. Phosphorylation at Thr-246 is essential for the G2/M transition. Highly expressed in ovary. Also expressed in brain, heart, kidney, large intestine, liver, lung, small intestine and testis.

The protein localises to the cytoplasm. Its subcellular location is the cytoskeleton. It localises to the microtubule organizing center. It is found in the centrosome. The protein resides in the spindle. The protein localises to the chromosome. Its subcellular location is the centromere. It localises to the kinetochore. It is found in the cleavage furrow. The protein resides in the cytoplasmic vesicle membrane. Functionally, required for centrosome duplication and formation and function of the mitotic spindle. Essential for the development of the cerebral cortex. May regulate the production of neurons by controlling the orientation of the mitotic spindle during division of cortical neuronal progenitors of the proliferative ventricular zone of the brain. Orientation of the division plane perpendicular to the layers of the cortex gives rise to two proliferative neuronal progenitors whereas parallel orientation of the division plane yields one proliferative neuronal progenitor and a postmitotic neuron. A premature shift towards a neuronal fate within the progenitor population may result in an overall reduction in the final number of neurons and an increase in the number of neurons in the deeper layers of the cortex. Acts as a RAB9A/B effector that tethers RAB9-associated late endosomes to the dynein motor for their retrograde transport to the trans-Golgi network. This Mus musculus (Mouse) protein is Nuclear distribution protein nudE homolog 1.